The chain runs to 502 residues: ATP synthase subunit alpha (502 aa).

169 to 176 contacts ATP; the sequence is GDRQTGKT.

It belongs to the ATPase alpha/beta chains family. F-type ATPases have 2 components, CF(1) - the catalytic core - and CF(0) - the membrane proton channel. CF(1) has five subunits: alpha(3), beta(3), gamma(1), delta(1), epsilon(1). CF(0) has three main subunits: a(1), b(2) and c(9-12). The alpha and beta chains form an alternating ring which encloses part of the gamma chain. CF(1) is attached to CF(0) by a central stalk formed by the gamma and epsilon chains, while a peripheral stalk is formed by the delta and b chains.

It is found in the cell inner membrane. The catalysed reaction is ATP + H2O + 4 H(+)(in) = ADP + phosphate + 5 H(+)(out). In terms of biological role, produces ATP from ADP in the presence of a proton gradient across the membrane. The alpha chain is a regulatory subunit. The polypeptide is ATP synthase subunit alpha (Trichlorobacter lovleyi (strain ATCC BAA-1151 / DSM 17278 / SZ) (Geobacter lovleyi)).